The following is an 856-amino-acid chain: MEAEELIGSSVTIDSIMSKMRDIKNKINEDCTDELSLSKICADHTETVNQIMRVGNTPENWLNFLLKLEKNSSPLNDDLLNKLIGRYSQAIEVLPPDKYGQNESFARIQVRLAELKAIQEPDDARDYFQMARENCKKFAFVHVSFAQFELSQGNLKKSEQLLHKAVETGAVPLQMLETAMRNLHLQKKQLLPEEDKKSVSASTVLSAQEPFSSSLGNVQNRSISCESRGQAGAARVLYGENLPPQDAEVRHQNPFKQTHAAKRSCPFGRVPVNLLNSPDFYVKTDSSAVTQLTTRLALSSVPLPYVTCLLHLQLLALAGLAKGSGPDRDAILPGSRPRGSDSYELRGLKPIQTIYLKDSLVSNEKSSELMSDLIALKSKTDSSLTKLEETKPEIAERRPMQWQSTRKPECVFQNPAAFAPLRHVPDVTPKADKESPPISVPKWLDPKSACETPSSSSLDDYMKCFKTPVVKNDFPPACPSSTPYSQLARLQQQQQQGLSTPLQSLQISGSSSINECISVNGRIYSILKQIGSGGSSKVFQVLNEKKQINAIKYVNLEDADSQTIESYRNEIAFLNKLQQHSDKIIRLYDYEITEQYIYMVMECGNIDLNSWLKKKKSINPWERKSYWKNMLEAVHIIHQHGIVHSDLKPANFVIVDGMLKLIDFGIANQMQPDTTSIVKDSQVGTVNYMAPEAIRDMSSSRENSKIRTKVSPRSDVWSLGCILYYMTYGRTPFQHIINQVSKLHAIINPAHEIEFPEISEKDLRDVLKCCLVRNPKERISIPELLTHPYVQIQPHPGSQMARGATDEMKYVLGQLVGLNSPNSILKTAKTLYERYNCGEGQDSSSSKTFDKKRERK.

An N-acetylmethionine modification is found at Met-1. Thr-32 is modified (phosphothreonine). A phosphoserine mark is found at Ser-36, Ser-277, and Ser-342. A Phosphothreonine modification is found at Thr-380. 3 positions are modified to phosphoserine: Ser-383, Ser-435, and Ser-454. Residues 524-790 (YSILKQIGSG…IPELLTHPYV (267 aa)) form the Protein kinase domain. ATP is bound by residues 530–538 (IGSGGSSKV) and Lys-552. The Proton acceptor role is filled by Asp-646. A Phosphoserine modification is found at Ser-820. Residues 837 to 856 (CGEGQDSSSSKTFDKKRERK) are disordered.

This sequence belongs to the protein kinase superfamily. Ser/Thr protein kinase family. Interacts with TPR; the interactions occurs in a microtubule-independent manner. Interacts with MAD1L1 and MAD2L1. Post-translationally, autophosphorylated. In terms of tissue distribution, present in rapidly proliferating cell lines; high levels in testis, bone marrow, spleen and thymus. Low levels in brain, heart, lung and kidney.

It catalyses the reaction L-seryl-[protein] + ATP = O-phospho-L-seryl-[protein] + ADP + H(+). The catalysed reaction is L-threonyl-[protein] + ATP = O-phospho-L-threonyl-[protein] + ADP + H(+). The enzyme catalyses L-tyrosyl-[protein] + ATP = O-phospho-L-tyrosyl-[protein] + ADP + H(+). Inhibited by the ATP-competitive kinase inhibitor, SP600125. Functionally, involved in mitotic spindle assembly checkpoint signaling, a process that delays anaphase until chromosomes are bioriented on the spindle, and in the repair of incorrect mitotic kinetochore-spindle microtubule attachments. Phosphorylates MAD1L1 to promote the mitotic spindle assembly checkpoint. Phosphorylates CDCA8/Borealin leading to enhanced AURKB activity at the kinetochore. Phosphorylates SKA3 at 'Ser-34' leading to dissociation of the SKA complex from microtubules and destabilization of microtubule-kinetochore attachments. Phosphorylates KNL1, KNTC1 and autophosphorylates. Phosphorylates MCRS1 which enhances recruitment of KIF2A to the minus end of spindle microtubules and promotes chromosome alignment. The sequence is that of Dual specificity protein kinase TTK (Ttk) from Mus musculus (Mouse).